Here is a 333-residue protein sequence, read N- to C-terminus: Cytochrome f (333 aa).

The N-terminal stretch at 1–37 (MRNSCKKARRTRPLKATIQALLVAIATMTFFFTSDIA) is a signal peptide. Over 38 to 298 (LPQSAAAYPF…TEIVLQDPNR (261 aa)) the chain is Cytoplasmic. 4 residues coordinate heme: Tyr45, Cys66, Cys69, and His70. Residues 299–319 (VKWMIAFICLVMLAQLMLILK) form a helical membrane-spanning segment. At 320-333 (KKQVEKVQAAEMNF) the chain is on the lumenal, thylakoid side.

Belongs to the cytochrome f family. In terms of assembly, the 4 large subunits of the cytochrome b6-f complex are cytochrome b6, subunit IV (17 kDa polypeptide, PetD), cytochrome f and the Rieske protein, while the 4 small subunits are PetG, PetL, PetM and PetN. The complex functions as a dimer. The cofactor is heme.

Its subcellular location is the cellular thylakoid membrane. In terms of biological role, component of the cytochrome b6-f complex, which mediates electron transfer between photosystem II (PSII) and photosystem I (PSI), cyclic electron flow around PSI, and state transitions. The sequence is that of Cytochrome f (petA) from Mastigocladus laminosus (Fischerella sp.).